We begin with the raw amino-acid sequence, 95 residues long: Defensin alpha 4 (95 aa).

Residues methionine 1–alanine 19 form the signal peptide. The propeptide occupies glutamate 20–glycine 62. 3 disulfides stabilise this stretch: cysteine 65–cysteine 93, cysteine 67–cysteine 82, and cysteine 72–cysteine 92.

The protein belongs to the alpha-defensin family.

Its subcellular location is the secreted. Functionally, host-defense peptide that has antimicrobial activity. Inhibits corticotropin (ACTH)-stimulated corticosterone production (in vitro). This is Defensin alpha 4 from Oryctolagus cuniculus (Rabbit).